A 154-amino-acid polypeptide reads, in one-letter code: Ascorbate-specific PTS system EIIA component (154 aa).

The region spanning 6–150 (SLAENKSIRL…QEVLDLIDRT (145 aa)) is the PTS EIIA type-2 domain. His68 functions as the Tele-phosphohistidine intermediate in the catalytic mechanism. His68 is modified (phosphohistidine).

Its subcellular location is the cytoplasm. Functionally, the phosphoenolpyruvate-dependent sugar phosphotransferase system (sugar PTS), a major carbohydrate active transport system, catalyzes the phosphorylation of incoming sugar substrates concomitantly with their translocation across the cell membrane. The enzyme II UlaABC PTS system is involved in ascorbate transport. This chain is Ascorbate-specific PTS system EIIA component (ulaC), found in Shigella boydii serotype 4 (strain Sb227).